The following is a 714-amino-acid chain: Fatty acid oxidation complex subunit alpha (714 aa).

Residues 1–190 (MEMTSAFTLN…KLGLVDDVVP (190 aa)) are enoyl-CoA hydratase. The tract at residues 306-714 (APLNSVGILG…FWKTTATDLQ (409 aa)) is 3-hydroxyacyl-CoA dehydrogenase.

This sequence in the N-terminal section; belongs to the enoyl-CoA hydratase/isomerase family. In the central section; belongs to the 3-hydroxyacyl-CoA dehydrogenase family. As to quaternary structure, heterotetramer of two alpha chains (FadJ) and two beta chains (FadI).

Its subcellular location is the cytoplasm. It catalyses the reaction a (3S)-3-hydroxyacyl-CoA = a (2E)-enoyl-CoA + H2O. It carries out the reaction a 4-saturated-(3S)-3-hydroxyacyl-CoA = a (3E)-enoyl-CoA + H2O. The enzyme catalyses a (3S)-3-hydroxyacyl-CoA + NAD(+) = a 3-oxoacyl-CoA + NADH + H(+). The catalysed reaction is (3S)-3-hydroxybutanoyl-CoA = (3R)-3-hydroxybutanoyl-CoA. The protein operates within lipid metabolism; fatty acid beta-oxidation. In terms of biological role, catalyzes the formation of a hydroxyacyl-CoA by addition of water on enoyl-CoA. Also exhibits 3-hydroxyacyl-CoA epimerase and 3-hydroxyacyl-CoA dehydrogenase activities. This is Fatty acid oxidation complex subunit alpha from Escherichia coli (strain 55989 / EAEC).